The chain runs to 121 residues: Large ribosomal subunit protein eL18 (121 aa).

This sequence belongs to the eukaryotic ribosomal protein eL18 family.

This Methanothermobacter thermautotrophicus (strain ATCC 29096 / DSM 1053 / JCM 10044 / NBRC 100330 / Delta H) (Methanobacterium thermoautotrophicum) protein is Large ribosomal subunit protein eL18.